Reading from the N-terminus, the 462-residue chain is NAD(P) transhydrogenase subunit beta (462 aa).

At 1-3 the chain is on the periplasmic side; sequence MSG. A helical membrane pass occupies residues 4-24; sequence GLVTAAYIVAAILFIFSLAGL. Residues 25 to 45 are Cytoplasmic-facing; that stretch reads SKHETSRQGNNFGIAGMAIAL. The helical transmembrane segment at 46-66 threads the bilayer; it reads IATIFGPDTGNVGWILLAMVI. The Periplasmic segment spans residues 67 to 82; sequence GGAIGIRLAKKVEMTE. The chain crosses the membrane as a helical span at residues 83-103; the sequence is MPELVAILHSFVGLAAVLVGF. The Cytoplasmic portion of the chain corresponds to 104-115; that stretch reads NSYLHHDAGMAP. Residues 116-136 traverse the membrane as a helical segment; sequence ILVNIHLTEVFLGIFIGAVTF. The Periplasmic portion of the chain corresponds to 137-164; sequence TGSVVAFGKLCGKISSKPLMLPNRHKMN. The chain crosses the membrane as a helical span at residues 165 to 185; it reads LAALVVSFLLLIVFVRTDSVG. Residues 186–188 are Cytoplasmic-facing; sequence LQV. A helical membrane pass occupies residues 189–209; the sequence is LALLIMTAIALVFGWHLVASI. The Periplasmic portion of the chain corresponds to 210-215; it reads GGADMP. Residues 216-236 form a helical membrane-spanning segment; sequence VVVSMLNSYSGWAAAAAGFML. Over 237-239 the chain is Cytoplasmic; sequence SND. A helical membrane pass occupies residues 240–260; that stretch reads LLIVTGALVGSSGAILSYIMC. Over 261 to 308 the chain is Periplasmic; that stretch reads KAMNRSFISVIAGGFGTDGSSTGDDQEVGEHREITAEETAELLKNSHS. The helical transmembrane segment at 309–329 threads the bilayer; the sequence is VIITPGYGMAVAQAQYPVAEI. Over 330–462 the chain is Cytoplasmic; that stretch reads TEKLRARGIN…ASVDAILKAL (133 aa).

This sequence belongs to the PNT beta subunit family. As to quaternary structure, heterodimer of an alpha and a beta chain.

The protein resides in the cell inner membrane. It catalyses the reaction NAD(+) + NADPH + H(+)(in) = NADH + NADP(+) + H(+)(out). Its function is as follows. The transhydrogenation between NADH and NADP is coupled to respiration and ATP hydrolysis and functions as a proton pump across the membrane. The protein is NAD(P) transhydrogenase subunit beta (pntB) of Escherichia coli O157:H7.